Consider the following 372-residue polypeptide: tRNA 2-selenouridine synthase (372 aa).

Positions 19 to 142 (LASGHPIMDV…MRQYLIDTID (124 aa)) constitute a Rhodanese domain. The active-site S-selanylcysteine intermediate is Cys-102.

The protein belongs to the SelU family. In terms of assembly, monomer.

The catalysed reaction is 5-methylaminomethyl-2-thiouridine(34) in tRNA + selenophosphate + (2E)-geranyl diphosphate + H2O + H(+) = 5-methylaminomethyl-2-selenouridine(34) in tRNA + (2E)-thiogeraniol + phosphate + diphosphate. It catalyses the reaction 5-methylaminomethyl-2-thiouridine(34) in tRNA + (2E)-geranyl diphosphate = 5-methylaminomethyl-S-(2E)-geranyl-thiouridine(34) in tRNA + diphosphate. It carries out the reaction 5-methylaminomethyl-S-(2E)-geranyl-thiouridine(34) in tRNA + selenophosphate + H(+) = 5-methylaminomethyl-2-(Se-phospho)selenouridine(34) in tRNA + (2E)-thiogeraniol. The enzyme catalyses 5-methylaminomethyl-2-(Se-phospho)selenouridine(34) in tRNA + H2O = 5-methylaminomethyl-2-selenouridine(34) in tRNA + phosphate. Functionally, involved in the post-transcriptional modification of the uridine at the wobble position (U34) of tRNA(Lys), tRNA(Glu) and tRNA(Gln). Catalyzes the conversion of 2-thiouridine (S2U-RNA) to 2-selenouridine (Se2U-RNA). Acts in a two-step process involving geranylation of 2-thiouridine (S2U) to S-geranyl-2-thiouridine (geS2U) and subsequent selenation of the latter derivative to 2-selenouridine (Se2U) in the tRNA chain. This chain is tRNA 2-selenouridine synthase, found in Shewanella loihica (strain ATCC BAA-1088 / PV-4).